The primary structure comprises 195 residues: HTH-type transcriptional regulator BetI (195 aa).

Residues 8 to 68 form the HTH tetR-type domain; sequence SIRRRQLIDA…ATMRDITSQL (61 aa). The H-T-H motif DNA-binding region spans 31–50; it reads TIAQIARRAGVSTGIISHYF.

Its pathway is amine and polyamine biosynthesis; betaine biosynthesis via choline pathway [regulation]. Its function is as follows. Repressor involved in the biosynthesis of the osmoprotectant glycine betaine. It represses transcription of the choline transporter BetT and the genes of BetAB involved in the synthesis of glycine betaine. This is HTH-type transcriptional regulator BetI from Escherichia coli (strain UTI89 / UPEC).